A 204-amino-acid polypeptide reads, in one-letter code: Lysozyme g (204 aa).

The N-terminal stretch at Met1–Ser19 is a signal peptide. 2 cysteine pairs are disulfide-bonded: Cys23/Cys79 and Cys37/Cys48. Active-site residues include Glu92 and Asp105.

Belongs to the glycosyl hydrolase 23 family.

It localises to the secreted. The catalysed reaction is Hydrolysis of (1-&gt;4)-beta-linkages between N-acetylmuramic acid and N-acetyl-D-glucosamine residues in a peptidoglycan and between N-acetyl-D-glucosamine residues in chitodextrins.. In terms of biological role, has bacteriolytic activity against M.luteus. In Struthio camelus (Common ostrich), this protein is Lysozyme g.